The following is a 113-amino-acid chain: UPF0482 protein KPN78578_15540 (113 aa).

The N-terminal stretch at 1–28 (MNMTLNKRWCLTAILALSAVVYTSSSYA) is a signal peptide. The segment at 38-60 (GDSAQSRQQASMEKEQWNDTRSL) is disordered. Positions 39-48 (DSAQSRQQAS) are enriched in polar residues. Residues 49-59 (MEKEQWNDTRS) show a composition bias toward basic and acidic residues.

This sequence belongs to the UPF0482 family.

The chain is UPF0482 protein KPN78578_15540 from Klebsiella pneumoniae subsp. pneumoniae (strain ATCC 700721 / MGH 78578).